The following is a 136-amino-acid chain: MAFCNKLSGILRQGVSQSSNGPVTSMLGSLRYMSSKLFVGGLSWGTDDSSLKQAFTSFGEVTEATVIADRETGRSRGFGFVSFSCEDSANNAIKEMDGKELNGRQIRVNLATERSSAPRSSFGGGGGYGGGGGGGY.

A mitochondrion-targeting transit peptide spans 1–33 (MAFCNKLSGILRQGVSQSSNGPVTSMLGSLRYM). The RRM domain occupies 35-113 (SKLFVGGLSW…RQIRVNLATE (79 aa)). The residue at position 43 (serine 43) is a Phosphoserine. Positions 113–136 (ERSSAPRSSFGGGGGYGGGGGGGY) are disordered. A compositionally biased stretch (gly residues) spans 122-136 (FGGGGGYGGGGGGGY). A glycine-rich (GR) required for cell-to-cell movement region spans residues 123–135 (GGGGGYGGGGGGG).

The protein belongs to the GR-RBP family. Binds to small phloem-mobile single-stranded RNAs (ss-sRNA, e.g. small interfering RNA (siRNA) and microRNA (miRNA)) in the phloeme exudate, including viral-derived sRNA (vsiRNA). As to expression, abundantly expressed in young plants, root tips, and flowers, but weakly in mature leaves and stems, implying highly expression in actively proliferating organs.

It is found in the mitochondrion. It localises to the secreted. Its function is as follows. Possibly has a role in RNA transcription or processing during stress. Binds sequence non-specifically to RNAs and DNAs. Mediates cell-to-cell trafficking of RNA interference (RNAi) signals (small RNAs (sRNA), e.g. small interfering RNA (siRNA) and microRNA (miRNA)) which regulate growth and development, as well as responses to environmental inputs, including pathogen attack; can compromise zucchini yellow mosaic virus (ZYMV) and tobacco rattle virus (TRV) infections at the early stage. The sequence is that of Glycine-rich RNA-binding protein 4, mitochondrial from Arabidopsis thaliana (Mouse-ear cress).